Here is a 91-residue protein sequence, read N- to C-terminus: Small ribosomal subunit protein bS16 (91 aa).

This sequence belongs to the bacterial ribosomal protein bS16 family.

This chain is Small ribosomal subunit protein bS16, found in Limosilactobacillus fermentum (strain NBRC 3956 / LMG 18251) (Lactobacillus fermentum).